The sequence spans 91 residues: Elongation factor 1-beta (91 aa).

It belongs to the EF-1-beta/EF-1-delta family.

Functionally, promotes the exchange of GDP for GTP in EF-1-alpha/GDP, thus allowing the regeneration of EF-1-alpha/GTP that could then be used to form the ternary complex EF-1-alpha/GTP/AAtRNA. The chain is Elongation factor 1-beta from Caldivirga maquilingensis (strain ATCC 700844 / DSM 13496 / JCM 10307 / IC-167).